The sequence spans 66 residues: Large ribosomal subunit protein bL35 (66 aa).

The protein belongs to the bacterial ribosomal protein bL35 family.

This chain is Large ribosomal subunit protein bL35, found in Moorella thermoacetica (strain ATCC 39073 / JCM 9320).